A 262-amino-acid chain; its full sequence is uncharacterized protein (262 aa).

The protein belongs to the glycosyltransferase 2 family.

This is an uncharacterized protein from Mycobacterium tuberculosis (strain CDC 1551 / Oshkosh).